The sequence spans 89 residues: Small ribosomal subunit protein bS18 (89 aa).

The span at 1-15 (MTTANTNETAAAAAA) shows a compositional bias: low complexity. Positions 1–22 (MTTANTNETAAAAAAKNRRNKK) are disordered.

Belongs to the bacterial ribosomal protein bS18 family. Part of the 30S ribosomal subunit. Forms a tight heterodimer with protein bS6.

Binds as a heterodimer with protein bS6 to the central domain of the 16S rRNA, where it helps stabilize the platform of the 30S subunit. The sequence is that of Small ribosomal subunit protein bS18 from Caldanaerobacter subterraneus subsp. tengcongensis (strain DSM 15242 / JCM 11007 / NBRC 100824 / MB4) (Thermoanaerobacter tengcongensis).